The sequence spans 395 residues: HORMA domain-containing protein 1 (395 aa).

The 203-residue stretch at 24–226 folds into the HORMA domain; sequence QQSLVLVKRL…TPFHTFKVKV (203 aa). The tract at residues 329 to 395 is disordered; it reads DVSESKTRSG…RKFSEPKEYV (67 aa). Residues 344 to 353 show a composition bias toward polar residues; that stretch reads KMANGNQPVK. Over residues 354 to 363 the composition is skewed to basic and acidic residues; sequence SSKENRKRNQ. Phosphoserine is present on S377. The Nuclear localization signal signature appears at 384-387; sequence KRRK.

Interacts with HORMAD2. Interacts with IHO1. Phosphorylated at Ser-378 in a SPO11-dependent manner.

It is found in the nucleus. The protein localises to the chromosome. Functionally, plays a key role in meiotic progression. Regulates 3 different functions during meiosis: ensures that sufficient numbers of processed DNA double-strand breaks (DSBs) are available for successful homology search by increasing the steady-state numbers of single-stranded DSB ends. Promotes synaptonemal-complex formation independently of its role in homology search. Plays a key role in the male mid-pachytene checkpoint and the female meiotic prophase checkpoint: required for efficient build-up of ATR activity on unsynapsed chromosome regions, a process believed to form the basis of meiotic silencing of unsynapsed chromatin (MSUC) and meiotic prophase quality control in both sexes. The polypeptide is HORMA domain-containing protein 1 (HORMAD1) (Canis lupus familiaris (Dog)).